A 2139-amino-acid chain; its full sequence is Voltage-dependent L-type calcium channel subunit alpha-1C (2139 aa).

The tract at residues 1–20 (MVNENTRMYVPEENHQGSNY) is disordered. Residues 1-124 (MVNENTRMYV…RACISIVEWK (124 aa)) are Cytoplasmic-facing. Residues 47 to 68 (GAALSWQAAIDAARQAKLMGSA) are calmodulin-binding. Positions 73–98 (ISTVSSTQRKRQQYGKPKKQGGTTAT) are disordered. Over residues 80-91 (QRKRQQYGKPKK) the composition is skewed to basic residues. An I repeat occupies 111 to 408 (NPIRRACISI…LVLGVLSGEF (298 aa)). The chain crosses the membrane as a helical span at residues 125-143 (PFEIIILLTIFANCVALAI). Residues 144 to 158 (YIPFPEDDSNATNSN) lie on the Extracellular side of the membrane. Residue Asn-153 is glycosylated (N-linked (GlcNAc...) asparagine). The helical transmembrane segment at 159–179 (LERVEYLFLIIFTVEAFLKVI) threads the bilayer. The Cytoplasmic segment spans residues 180 to 188 (AYGLLFHPN). The helical transmembrane segment at 189 to 209 (AYLRNGWNLLDFIIVVVGLFS) threads the bilayer. Topologically, residues 210–232 (AILEQATKADGANALGGKGAGFD) are extracellular. A helical membrane pass occupies residues 233–251 (VKALRAFRVLRPLRLVSGV). Over 252–268 (PSLQVVLNSIIKAMVPL) the chain is Cytoplasmic. A helical transmembrane segment spans residues 269-290 (LHIALLVLFVIIIYAIIGLELF). At 291–350 (MGKMHKTCYNQEGIIDVPAEEDPSPCALETGHGRQCQNGTVCKPGWDGPKHGITNFDNFA) the chain is on the extracellular side. Intrachain disulfides connect Cys-298–Cys-326 and Cys-316–Cys-332. The N-linked (GlcNAc...) asparagine glycan is linked to Asn-328. The pore-forming intramembrane region spans 351–372 (FAMLTVFQCITMEGWTDVLYWM). The Selectivity filter of repeat I signature appears at 361-364 (TMEG). Glu-363 is a binding site for Ca(2+). Over 373–380 (QDAMGYEL) the chain is Extracellular. The helical transmembrane segment at 381–401 (PWVYFVSLVIFGSFFVLNLVL) threads the bilayer. Over 402 to 524 (GVLSGEFSKE…RKCRAAVKSN (123 aa)) the chain is Cytoplasmic. The interval 428-445 (QQLEEDLKGYLDWITQAE) is AID/alpha-interaction domain; mediates interaction with the beta subunit. The disordered stretch occupies residues 449 to 481 (PENEDEGMDEDKPRNMSMPTSETESVNTENVAG). The span at 465–478 (SMPTSETESVNTEN) shows a compositional bias: polar residues. Ser-469 is subject to Phosphoserine. Residue Thr-476 is modified to Phosphothreonine. One copy of the II repeat lies at 510–756 (NRFCRRKCRA…VFLAIAVDNL (247 aa)). Residues 525–543 (VFYWLVIFLVFLNTLTIAS) form a helical membrane-spanning segment. Over 544-554 (EHYNQPHWLTE) the chain is Extracellular. A helical membrane pass occupies residues 555–575 (VQDTANKALLALFTAEMLLKM). The Cytoplasmic segment spans residues 576-586 (YSLGLQAYFVS). Residues 587-606 (LFNRFDCFIVCGGILETILV) traverse the membrane as a helical segment. The Extracellular segment spans residues 607 to 615 (ETKIMSPLG). The chain crosses the membrane as a helical span at residues 616–634 (ISVLRCVRLLRIFKITRYW). Residues 635–653 (NSLSNLVASLLNSVRSIAS) are Cytoplasmic-facing. A helical membrane pass occupies residues 654-673 (LLLLLFLFIIIFSLLGMQLF). Over 674-693 (GGKFNFDEMQTRRSTFDNFP) the chain is Extracellular. The segment at residues 694–715 (QSLLTVFQILTGEDWNSVMYDG) is an intramembrane region (pore-forming). The Selectivity filter of repeat II signature appears at 704–707 (TGED). Glu-706 contributes to the Ca(2+) binding site. Topologically, residues 716 to 725 (IMAYGGPSFP) are extracellular. The chain crosses the membrane as a helical span at residues 726–745 (GMLVCIYFIILFICGNYILL). Over 746–900 (NVFLAIAVDN…LQCHRIVNDT (155 aa)) the chain is Cytoplasmic. The segment at 764–861 (SAQKEEEEEK…EMPVGPRPRP (98 aa)) is disordered. The span at 783 to 806 (SPEKKQEVMEKPAVEESKEEKIEL) shows a compositional bias: basic and acidic residues. Phosphoserine is present on residues Ser-808 and Ser-815. The tract at residues 829–876 (SENEDKSPHSNPDTAGEEDEEEPEMPVGPRPRPLSELHLKEKAVPMPE) is interaction with STAC2. Residues 843–852 (AGEEDEEEPE) are compositionally biased toward acidic residues. One copy of the III repeat lies at 887–1169 (NRFRLQCHRI…IFVGFVIVTF (283 aa)). The chain crosses the membrane as a helical span at residues 901–919 (IFTNLILFFILLSSISLAA). Residues 920–931 (EDPVQHTSFRNH) are Extracellular-facing. A helical transmembrane segment spans residues 932–951 (ILGNADYVFTSIFTLEIILK). Residues 952 to 967 (MTAYGAFLHKGSFCRN) are Cytoplasmic-facing. The helical transmembrane segment at 968–986 (YFNILDLLVVSVSLISFGI) threads the bilayer. At 987-993 (QSSAINV) the chain is on the extracellular side. Residues 994-1012 (VKILRVLRVLRPLRAINRA) form a helical membrane-spanning segment. Over 1013 to 1031 (KGLKHVVQCVFVAIRTIGN) the chain is Cytoplasmic. The helical transmembrane segment at 1032 to 1051 (IVIVTTLLQFMFACIGVQLF) threads the bilayer. At 1052–1101 (KGKLYTCSDSSKQTEAECKGNYITYKDGEVDHPIIQPRSWENSKFDFDNV) the chain is on the extracellular side. Cys-1058 and Cys-1069 are joined by a disulfide. Residues 1089-1178 (RSWENSKFDF…FQEQGEQEYK (90 aa)) form a dihydropyridine binding region. An intramembrane region (pore-forming) is located at residues 1102–1122 (LAAMMALFTVSTFEGWPELLY). Positions 1113-1116 (TFEG) match the Selectivity filter of repeat III motif. Glu-1115 lines the Ca(2+) pocket. Over 1123–1139 (RSIDSHTEDKGPIYNYR) the chain is Extracellular. A helical transmembrane segment spans residues 1140–1161 (VEISIFFIIYIIIIAFFMMNIF). At 1162–1219 (VGFVIVTFQEQGEQEYKNCELDKNQRQCVEYALKARPLRRYIPKNQHQYKVWYVVNST) the chain is on the cytoplasmic side. The stretch at 1206 to 1479 (NQHQYKVWYV…LFVAVIMDNF (274 aa)) is one IV repeat. Residues 1220–1241 (YFEYLMFVLILLNTICLAMQHY) form a helical membrane-spanning segment. Residues 1242-1249 (GQSCLFKI) are Extracellular-facing. The chain crosses the membrane as a helical span at residues 1250–1271 (AMNILNMLFTGLFTVEMILKLI). Residues 1272 to 1281 (AFKPKGYFSD) are Cytoplasmic-facing. Residues 1282–1301 (PWNVFDFLIVIGSIIDVILS) traverse the membrane as a helical segment. The Extracellular segment spans residues 1302–1324 (ETNPAEHTQCSPSMSAEENSRIS). Residues 1325–1343 (ITFFRLFRVMRLVKLLSRG) traverse the membrane as a helical segment. Residues 1344–1361 (EGIRTLLWTFIKSFQALP) lie on the Cytoplasmic side of the membrane. A helical transmembrane segment spans residues 1362–1382 (YVALLIVMLFFIYAVIGMQVF). The Extracellular portion of the chain corresponds to 1383–1404 (GKIALNDTTEINRNNNFQTFPQ). The N-linked (GlcNAc...) asparagine glycan is linked to Asn-1388. Positions 1405–1423 (AVLLLFRCATGEAWQDIML) form an intramembrane region, pore-forming. The short motif at 1414–1417 (TGEA) is the Selectivity filter of repeat IV element. The Extracellular portion of the chain corresponds to 1424–1451 (ACMPGKKCAPESEPSNSTEGETPCGSSF). The segment at 1430–1498 (KCAPESEPSN…LGPHHLDEFK (69 aa)) is dihydropyridine binding. Cys-1431 and Cys-1447 are joined by a disulfide. Asn-1439 carries N-linked (GlcNAc...) asparagine glycosylation. The interval 1444–1486 (ETPCGSSFAVFYFISFYMLCAFLIINLFVAVIMDNFDYLTRDW) is phenylalkylamine binding. A helical transmembrane segment spans residues 1452-1476 (AVFYFISFYMLCAFLIINLFVAVIM). Residues 1477–2139 (DNFDYLTRDW…ADSRSYVSNL (663 aa)) are Cytoplasmic-facing. Residues 1611 to 1638 (DEVTVGKFYATFLIQEYFRKFKKRKEQG) form an important for interaction with STAC1, STAC2 and STAC3 region. The interval 1611–1644 (DEVTVGKFYATFLIQEYFRKFKKRKEQGLVGKPS) is calmodulin-binding. Residues 1617-1637 (KFYATFLIQEYFRKFKKRKEQ) are calmodulin-binding IQ region. The important for localization in at the junctional membrane stretch occupies residues 1651–1670 (LQAGLRTLHDIGPEIRRAIS). Ser-1670 and Ser-1691 each carry phosphoserine. Polar residues-rich tracts occupy residues 1732 to 1741 (KTGNNQADTE) and 1751 to 1763 (STFTPSSYSSTGS). The tract at residues 1732-1773 (KTGNNQADTESPSHEKLVDSTFTPSSYSSTGSNANINNANNT) is disordered. Residues 1764–1773 (NANINNANNT) show a composition bias toward low complexity. Position 1897 is a phosphoserine; by PKA (Ser-1897). Residues 1940 to 1966 (RSHSPTTFPRPCPTPPVTPGSRGRPLR) are disordered. Positions 1947-1957 (FPRPCPTPPVT) are enriched in pro residues.

The protein belongs to the calcium channel alpha-1 subunit (TC 1.A.1.11) family. CACNA1C subfamily. As to quaternary structure, component of a calcium channel complex consisting of a pore-forming alpha subunit (CACNA1C) and ancillary beta, gamma and delta subunits. The channel complex contains alpha, beta, gamma and delta subunits in a 1:1:1:1 ratio, i.e. it contains only one of each type of subunit. CACNA1C channel activity is modulated by ancillary subunits, such as CACNB1, CACNB2, CACNB3, CACNA2D1 and CACNA2D4. Interacts with the gamma subunits CACNG4, CACNG6, CACNG7 and CACNG8. Interacts with CACNB1. Interacts with CACNB2. Identified in a complex with CACNA2D4 and CACNB3. Interacts with CACNB3. Interacts with CACNA2D1. Interacts with CACNA2D4. Interacts with CALM1. Interacts (via the N-terminus and the C-terminal C and IQ motifs) with CABP1; this inhibits Ca(2+)-dependent channel inactivation. The binding via the C motif is calcium independent whereas the binding via IQ requires the presence of calcium and is mutually exclusive with calmodulin binding. The binding to the cytoplasmic N-terminal domain is calcium independent but is essential for the channel modulation. Interacts (via C-terminal CDB motif) with CABP5; in a calcium-dependent manner. Interacts with CIB1; the interaction increases upon cardiomyocytes hypertrophy. Interacts with STAC2 and STAC3; this inhibits channel inactivation. In terms of processing, phosphorylation by PKA at Ser-1897 activates the channel. Elevated levels of blood glucose lead to increased phosphorylation by PKA. In terms of tissue distribution, detected in embryonic heart. Detected in retina in rod bipolar cells. Detected in tibialis artery (at protein level). Detected in smooth muscle cells from tibialis artery and in mesenteric artery. High expression in heart, followed by brain and spinal cord.

The protein resides in the cell membrane. The protein localises to the sarcolemma. It is found in the perikaryon. It localises to the postsynaptic density membrane. Its subcellular location is the cell projection. The protein resides in the dendrite. The protein localises to the T-tubule. It carries out the reaction Ca(2+)(in) = Ca(2+)(out). With respect to regulation, inhibited by dihydropyridines (DHP), such as isradipine. Inhibited by nifedipine. Channel activity is regulated by Ca(2+) and calmodulin. Binding of STAC1, STAC2 or STAC3 to a region that overlaps with the calmodulin binding site inhibits channel inactivation by Ca(2+) and calmodulin. Binding of calmodulin or CABP1 at the same regulatory sites results in opposite effects on the channel function. Shear stress and pressure increases calcium channel activity. Functionally, pore-forming, alpha-1C subunit of the voltage-gated calcium channel that gives rise to L-type calcium currents. Mediates influx of calcium ions into the cytoplasm, and thereby triggers calcium release from the sarcoplasm. Plays an important role in excitation-contraction coupling in the heart. Required for normal heart development and normal regulation of heart rhythm. Required for normal contraction of smooth muscle cells in blood vessels and in the intestine. Essential for normal blood pressure regulation via its role in the contraction of arterial smooth muscle cells. Long-lasting (L-type) calcium channels belong to the 'high-voltage activated' (HVA) group. The sequence is that of Voltage-dependent L-type calcium channel subunit alpha-1C (Cacna1c) from Mus musculus (Mouse).